The following is a 100-amino-acid chain: uncharacterized protein (100 aa).

It belongs to the csb family.

This is an uncharacterized protein from Dictyostelium discoideum (Social amoeba).